Here is a 902-residue protein sequence, read N- to C-terminus: Glutamate receptor 4 (902 aa).

Residues 1 to 20 form the signal peptide; it reads MRIICRQIVLLFSGFWGLAM. Residues 22-544 are Extracellular-facing; that stretch reads AFPSSVQIGG…GVFSFLDPLA (523 aa). N52, N56, N258, N371, N407, and N414 each carry an N-linked (GlcNAc...) asparagine glycan. An intrachain disulfide couples C84 to C331. Residues P500, T502, and R507 each coordinate L-glutamate. A helical transmembrane segment spans residues 545–565; sequence YEIWMCIVFAYIGVSVVLFLV. Residues 566-592 lie on the Cytoplasmic side of the membrane; it reads SRFSPYEWHTEEPEDGKEGPSDQPPNE. Residues 593-608 constitute an intramembrane region (helical; Pore-forming); that stretch reads FGIFNSLWFSLGAFMQ. An intramembrane segment occupies 609–611; it reads QGC. C611 carries the S-palmitoyl cysteine lipid modification. Residues 612 to 617 lie on the Cytoplasmic side of the membrane; that stretch reads DISPRS. Residues 618–638 form a helical membrane-spanning segment; the sequence is LSGRIVGGVWWFFTLIIISSY. Topologically, residues 639–813 are extracellular; the sequence is TANLAAFLTV…DKTSALSLSN (175 aa). L-glutamate-binding residues include S676, T677, and E727. A disulfide bridge links C740 with C795. The chain crosses the membrane as a helical span at residues 814-834; the sequence is VAGVFYILVGGLGLAMLVALI. Topologically, residues 835 to 902 are cytoplasmic; it reads EFCYKSRAEA…GLAVIASDLP (68 aa). The S-palmitoyl cysteine moiety is linked to residue C837. Position 862 is a phosphoserine (S862).

This sequence belongs to the glutamate-gated ion channel (TC 1.A.10.1) family. GRIA4 subfamily. As to quaternary structure, homotetramer or heterotetramer of pore-forming glutamate receptor subunits. Tetramers may be formed by the dimerization of dimers. Interacts with EPB41L1 via its C-terminus. Isoform 3 interacts with PICK1. Found in a complex with GRIA1, GRIA2, GRIA3, CNIH2, CNIH3, CACNG2, CACNG3, CACNG4, CACNG5, CACNG7 and CACNG8. Interacts with CACNG5 and PRKCG. Found in a complex with GRIA1, GRIA2, GRIA3, DLG4, CACNG8 and CNIH2. Post-translationally, palmitoylated. Depalmitoylated upon L-glutamate stimulation. ZDHHC3/GODZ specifically palmitoylates Cys-611, which leads to Golgi retention and decreased cell surface expression. In contrast, Cys-837 palmitoylation does not affect cell surface expression but regulates stimulation-dependent endocytosis. Phosphorylated at Ser-862 by PRKCG; phosphorylation increases plasma membrane-associated GRI4 expression.

The protein resides in the cell membrane. It localises to the postsynaptic cell membrane. It is found in the cell projection. The protein localises to the dendrite. The enzyme catalyses Ca(2+)(in) = Ca(2+)(out). It catalyses the reaction Na(+)(in) = Na(+)(out). It carries out the reaction Mg(2+)(in) = Mg(2+)(out). Its function is as follows. Ionotropic glutamate receptor that functions as a ligand-gated cation channel, gated by L-glutamate and glutamatergic agonists such as alpha-amino-3-hydroxy-5-methyl-4-isoxazolepropionic acid (AMPA), quisqualic acid, and kainic acid. L-glutamate acts as an excitatory neurotransmitter at many synapses in the central nervous system and plays an important role in fast excitatory synaptic transmission. Binding of the excitatory neurotransmitter L-glutamate induces a conformation change, leading to the opening of the cation channel, and thereby converts the chemical signal to an electrical impulse upon entry of monovalent and divalent cations such as sodium and calcium. The receptor then desensitizes rapidly and enters a transient inactive state, characterized by the presence of bound agonist. In the presence of CACNG8, shows resensitization which is characterized by a delayed accumulation of current flux upon continued application of L-glutamate. This is Glutamate receptor 4 from Mus musculus (Mouse).